The chain runs to 637 residues: 1-deoxy-D-xylulose-5-phosphate synthase (637 aa).

Residues His71 and 112-114 (SHA) contribute to the thiamine diphosphate site. Asp144 provides a ligand contact to Mg(2+). Residues 145 to 146 (GA), Asn173, Tyr284, and Glu365 contribute to the thiamine diphosphate site. Asn173 lines the Mg(2+) pocket.

It belongs to the transketolase family. DXPS subfamily. In terms of assembly, homodimer. Mg(2+) is required as a cofactor. Requires thiamine diphosphate as cofactor.

The catalysed reaction is D-glyceraldehyde 3-phosphate + pyruvate + H(+) = 1-deoxy-D-xylulose 5-phosphate + CO2. Its pathway is metabolic intermediate biosynthesis; 1-deoxy-D-xylulose 5-phosphate biosynthesis; 1-deoxy-D-xylulose 5-phosphate from D-glyceraldehyde 3-phosphate and pyruvate: step 1/1. In terms of biological role, catalyzes the acyloin condensation reaction between C atoms 2 and 3 of pyruvate and glyceraldehyde 3-phosphate to yield 1-deoxy-D-xylulose-5-phosphate (DXP). The chain is 1-deoxy-D-xylulose-5-phosphate synthase from Mycolicibacterium gilvum (strain PYR-GCK) (Mycobacterium gilvum (strain PYR-GCK)).